Reading from the N-terminus, the 100-residue chain is Urease subunit gamma (100 aa).

This sequence belongs to the urease gamma subunit family. As to quaternary structure, heterotrimer of UreA (gamma), UreB (beta) and UreC (alpha) subunits. Three heterotrimers associate to form the active enzyme.

The protein localises to the cytoplasm. It carries out the reaction urea + 2 H2O + H(+) = hydrogencarbonate + 2 NH4(+). Its pathway is nitrogen metabolism; urea degradation; CO(2) and NH(3) from urea (urease route): step 1/1. This Actinobacillus pleuropneumoniae serotype 5b (strain L20) protein is Urease subunit gamma.